The primary structure comprises 120 residues: MFVLSGYEYFLGFLIVSSLVPILALTASKLLRPKGGGPERKTTYESGMEPIGGAWIQFNIRYYMFALVFVVFDVETVFLYPWAVAFNQLGLLAFVEALIFIAILVIALVYAWRKGALEWS.

3 helical membrane-spanning segments follow: residues 2–22 (FVLS…LVPI), 64–84 (MFAL…PWAV), and 89–109 (LGLL…IALV).

Belongs to the complex I subunit 3 family. NDH-1 can be composed of about 15 different subunits; different subcomplexes with different compositions have been identified which probably have different functions.

It localises to the cellular thylakoid membrane. It catalyses the reaction a plastoquinone + NADH + (n+1) H(+)(in) = a plastoquinol + NAD(+) + n H(+)(out). It carries out the reaction a plastoquinone + NADPH + (n+1) H(+)(in) = a plastoquinol + NADP(+) + n H(+)(out). Its function is as follows. NDH-1 shuttles electrons from an unknown electron donor, via FMN and iron-sulfur (Fe-S) centers, to quinones in the respiratory and/or the photosynthetic chain. The immediate electron acceptor for the enzyme in this species is believed to be plastoquinone. Couples the redox reaction to proton translocation, and thus conserves the redox energy in a proton gradient. Cyanobacterial NDH-1 also plays a role in inorganic carbon-concentration. The polypeptide is NAD(P)H-quinone oxidoreductase subunit 3 (Picosynechococcus sp. (strain ATCC 27264 / PCC 7002 / PR-6) (Agmenellum quadruplicatum)).